A 532-amino-acid chain; its full sequence is Flavin-containing monooxygenase 3 (532 aa).

FAD contacts are provided by residues 9 to 13 (GAGVS), E32, 40 to 41 (LW), and 61 to 62 (NS). NADP(+) contacts are provided by residues 60 to 61 (TN) and 195 to 198 (SGCD). A Phosphoserine modification is found at S401. A helical membrane pass occupies residues 510 to 530 (FFFHWLKPFAIPILLIAVFLG).

The protein belongs to the FMO family. FAD is required as a cofactor. Liver.

The protein localises to the microsome membrane. The protein resides in the endoplasmic reticulum membrane. The enzyme catalyses trimethylamine + NADPH + O2 = trimethylamine N-oxide + NADP(+) + H2O. It catalyses the reaction N,N-dimethylaniline + NADPH + O2 + H(+) = N,N-dimethylaniline N-oxide + NADP(+) + H2O. The catalysed reaction is hypotaurine + NADPH + O2 + H(+) = taurine + NADP(+) + H2O. It carries out the reaction (S)-nicotine + NADPH + O2 = trans-(S)-nicotine N(1')-oxide + NADP(+) + H2O. The enzyme catalyses albendazole + NADPH + O2 + H(+) = albendazole S-oxide + NADP(+) + H2O. Functionally, essential hepatic enzyme that catalyzes the oxygenation of a wide variety of nitrogen- and sulfur-containing compounds including drugs as well as dietary compounds. Plays an important role in the metabolism of trimethylamine (TMA), via the production of trimethylamine N-oxide (TMAO) metabolite. TMA is generated by the action of gut microbiota using dietary precursors such as choline, choline containing compounds, betaine or L-carnitine. By regulating TMAO concentration, FMO3 directly impacts both platelet responsiveness and rate of thrombus formation. This chain is Flavin-containing monooxygenase 3 (FMO3), found in Macaca mulatta (Rhesus macaque).